The sequence spans 128 residues: Anion exchange transporter (128 aa).

The Extracellular portion of the chain corresponds to 1 to 14; sequence LFSFKELNEQFKRK. Residues 15–35 traverse the membrane as a helical segment; it reads IKVVLPVDLVLIIAASFACYC. At 36-66 the chain is on the cytoplasmic side; that stretch reads TNMENTYGLEVVGHIPRGIPPPRAPPMNILS. Residues 67–87 traverse the membrane as a helical segment; that stretch reads AVITEAFGVALVGYAASLALA. The Extracellular segment spans residues 88-103; that stretch reads QGSAKKFKYSVDDNQE. The chain crosses the membrane as a helical span at residues 104-124; that stretch reads FLAHGLSNVISSFLFCIPSAA. Residues 125–128 lie on the Cytoplasmic side of the membrane; it reads AMGR.

It belongs to the SLC26A/SulP transporter (TC 2.A.53) family. As to expression, expressed in gastric epithelium, predominantly in the gastric parietal cells but also at lower levels in mucosal cells.

The protein resides in the basolateral cell membrane. The protein localises to the recycling endosome membrane. Its subcellular location is the apical cell membrane. It localises to the lateral cell membrane. The catalysed reaction is chloride(in) = chloride(out). The enzyme catalyses iodide(out) = iodide(in). It catalyses the reaction bromide(in) = bromide(out). It carries out the reaction oxalate(in) = oxalate(out). The catalysed reaction is nitrate(in) = nitrate(out). The enzyme catalyses sulfate(in) = sulfate(out). It catalyses the reaction D-gluconate(in) = D-gluconate(out). It carries out the reaction thiocyanate(in) = thiocyanate(out). The catalysed reaction is hydrogencarbonate(in) = hydrogencarbonate(out). The enzyme catalyses hydrogencarbonate(in) + chloride(out) = hydrogencarbonate(out) + chloride(in). In terms of biological role, acts as an anion channel mediating the transport of chloride, bromide, iodide, nitrate, sulfate, gluconate, thiocyanate, oxalate and bicarbonate ions. Its permeability towards bicarbonate is weak and increases when pH is above 7. Mediates thiocyanate transport in retinal pigment epithelium cells. Mediates iodide transport in the thyroid gland, playing an important role in the synthesis of thyroid hormones and the maintenance of thyroid function. The sequence is that of Anion exchange transporter from Oryctolagus cuniculus (Rabbit).